Here is a 105-residue protein sequence, read N- to C-terminus: UPF0060 membrane protein Ajs_1326 (105 aa).

4 helical membrane passes run 4–24 (FALF…PYLW), 30–50 (SAWL…LLTL), 60–80 (AAYG…VDGI), and 82–102 (PTAW…LIMF).

This sequence belongs to the UPF0060 family.

Its subcellular location is the cell inner membrane. This chain is UPF0060 membrane protein Ajs_1326, found in Acidovorax sp. (strain JS42).